The chain runs to 302 residues: Digeranylgeranylglyceryl phosphate synthase (302 aa).

A run of 8 helical transmembrane segments spans residues L21 to G41, I43 to Y63, I103 to L123, I144 to M164, G167 to L187, A218 to I238, M244 to L264, and A282 to M302.

Belongs to the UbiA prenyltransferase family. DGGGP synthase subfamily. Mg(2+) serves as cofactor.

The protein resides in the cell membrane. The enzyme catalyses sn-3-O-(geranylgeranyl)glycerol 1-phosphate + (2E,6E,10E)-geranylgeranyl diphosphate = 2,3-bis-O-(geranylgeranyl)-sn-glycerol 1-phosphate + diphosphate. Its pathway is membrane lipid metabolism; glycerophospholipid metabolism. Prenyltransferase that catalyzes the transfer of the geranylgeranyl moiety of geranylgeranyl diphosphate (GGPP) to the C2 hydroxyl of (S)-3-O-geranylgeranylglyceryl phosphate (GGGP). This reaction is the second ether-bond-formation step in the biosynthesis of archaeal membrane lipids. The chain is Digeranylgeranylglyceryl phosphate synthase from Hyperthermus butylicus (strain DSM 5456 / JCM 9403 / PLM1-5).